Consider the following 91-residue polypeptide: uncharacterized protein (91 aa).

Belongs to the UPF0440 family.

This is an uncharacterized protein from Methanothermobacter thermautotrophicus (strain ATCC 29096 / DSM 1053 / JCM 10044 / NBRC 100330 / Delta H) (Methanobacterium thermoautotrophicum).